A 627-amino-acid polypeptide reads, in one-letter code: Chaperone protein HtpG (627 aa).

The segment at Met1 to Arg343 is a; substrate-binding. The segment at Glu344–Lys553 is b. A c region spans residues Val554–Ser627.

Belongs to the heat shock protein 90 family. In terms of assembly, homodimer.

Its subcellular location is the cytoplasm. Molecular chaperone. Has ATPase activity. The protein is Chaperone protein HtpG of Natranaerobius thermophilus (strain ATCC BAA-1301 / DSM 18059 / JW/NM-WN-LF).